We begin with the raw amino-acid sequence, 56 residues long: uncharacterized protein (56 aa).

A run of 2 helical transmembrane segments spans residues 5 to 23 (VLIF…YWIY) and 33 to 55 (ITAG…ILGW).

It localises to the cell membrane. This is an uncharacterized protein from Archaeoglobus fulgidus (strain ATCC 49558 / DSM 4304 / JCM 9628 / NBRC 100126 / VC-16).